The following is a 402-amino-acid chain: Imidazolonepropionase (402 aa).

Fe(3+) is bound by residues His-66 and His-68. Zn(2+) contacts are provided by His-66 and His-68. 4-imidazolone-5-propanoate-binding residues include Arg-75, Tyr-138, and His-171. Tyr-138 contacts N-formimidoyl-L-glutamate. His-236 contributes to the Fe(3+) binding site. Residue His-236 participates in Zn(2+) binding. Gln-239 is a 4-imidazolone-5-propanoate binding site. Asp-311 is a Fe(3+) binding site. Asp-311 contacts Zn(2+). N-formimidoyl-L-glutamate-binding residues include Asn-313 and Gly-315. 4-imidazolone-5-propanoate is bound at residue Thr-316.

The protein belongs to the metallo-dependent hydrolases superfamily. HutI family. It depends on Zn(2+) as a cofactor. Fe(3+) is required as a cofactor.

It localises to the cytoplasm. It carries out the reaction 4-imidazolone-5-propanoate + H2O = N-formimidoyl-L-glutamate. Its pathway is amino-acid degradation; L-histidine degradation into L-glutamate; N-formimidoyl-L-glutamate from L-histidine: step 3/3. Functionally, catalyzes the hydrolytic cleavage of the carbon-nitrogen bond in imidazolone-5-propanoate to yield N-formimidoyl-L-glutamate. It is the third step in the universal histidine degradation pathway. The polypeptide is Imidazolonepropionase (Pseudomonas paraeruginosa (strain DSM 24068 / PA7) (Pseudomonas aeruginosa (strain PA7))).